Here is a 56-residue protein sequence, read N- to C-terminus: Small ribosomal subunit protein eS31 (56 aa).

Residues Cys28, Cys31, Cys46, and Cys49 each coordinate Zn(2+). Residues 28 to 49 (CPRCGPGVFMANHKDRWSCGRC) form a C4-type zinc finger.

The protein belongs to the eukaryotic ribosomal protein eS31 family. Part of the 30S ribosomal subunit. Zn(2+) serves as cofactor.

The chain is Small ribosomal subunit protein eS31 from Thermococcus gammatolerans (strain DSM 15229 / JCM 11827 / EJ3).